Consider the following 164-residue polypeptide: FMN reductase (NADH) RutF (164 aa).

Belongs to the non-flavoprotein flavin reductase family. RutF subfamily.

The enzyme catalyses FMNH2 + NAD(+) = FMN + NADH + 2 H(+). Functionally, catalyzes the reduction of FMN to FMNH2 which is used to reduce pyrimidine by RutA via the Rut pathway. In Escherichia coli O6:K15:H31 (strain 536 / UPEC), this protein is FMN reductase (NADH) RutF.